The sequence spans 179 residues: MEVLREKYIKEVVPAMMRKFGYKNPMAVPKIEKIVVNIGVSEAVQNPGAIEAAARDLAIITGQKPIVRKARKSIANFHLRKGMPIGLKVTLRGERMYAFLYKLINLALPRVRDFSGVSPNSFDGRGNYSLGLKEQLVFPEIEYDKIDRIRGMDITIVTTAKTDEEAKELLALLGMPFKK.

It belongs to the universal ribosomal protein uL5 family. In terms of assembly, part of the 50S ribosomal subunit; part of the 5S rRNA/L5/L18/L25 subcomplex. Contacts the 5S rRNA and the P site tRNA. Forms a bridge to the 30S subunit in the 70S ribosome.

In terms of biological role, this is one of the proteins that bind and probably mediate the attachment of the 5S RNA into the large ribosomal subunit, where it forms part of the central protuberance. In the 70S ribosome it contacts protein S13 of the 30S subunit (bridge B1b), connecting the 2 subunits; this bridge is implicated in subunit movement. Contacts the P site tRNA; the 5S rRNA and some of its associated proteins might help stabilize positioning of ribosome-bound tRNAs. This is Large ribosomal subunit protein uL5 from Dictyoglomus turgidum (strain DSM 6724 / Z-1310).